The following is a 992-amino-acid chain: Ribosome quality control complex subunit NEMF homolog (992 aa).

Basic and acidic residues predominate over residues 214–231 (KETTEETPEAEDKPEKGG). Residues 214 to 245 (KETTEETPEAEDKPEKGGKKQRKKQQNTKLEQ) form a disordered region. Coiled coils occupy residues 331 to 370 (STQE…LTKV) and 481 to 514 (SAAQ…VRTI). Disordered regions lie at residues 688-715 (EVEH…NTEI) and 771-895 (GPSR…GDVD). The span at 702–715 (SNINLSEPSSNTEI) shows a compositional bias: polar residues. A coiled-coil region spans residues 774 to 839 (RKKQVSAKKT…QDDEEREIRM (66 aa)). Residues 782–796 (KTKEDKARAKQEAAK) show a composition bias toward basic and acidic residues. Positions 814 to 825 (RGQKGKLKKMKQ) are enriched in basic residues. A compositionally biased stretch (basic and acidic residues) spans 845-874 (SGKEKPQASADKVVEKSESTKEYVKPEKSA).

It belongs to the NEMF family. Component of the ribosome quality control complex (RQC), composed of at least the E3 ubiquitin ligase l(3)76BDr/LTN1 and Clbn/NEMF associated with the 60S ribosomal subunit. The complex probably also contains TCF25 as well as TER94/VCP and its ubiquitin-binding cofactors. Interacts (via its C-terminus) with pros (via its homeobox). Interacts (via its N-terminus) with emb. In terms of tissue distribution, expressed in enterocytes (at protein level).

Its subcellular location is the nucleus. It is found in the cytoplasm. The protein localises to the mitochondrion outer membrane. Key component of the ribosome quality control complex (RQC), a ribosome-associated complex that mediates the extraction of incompletely synthesized nascent chains from stalled ribosomes as well as their ubiquitin-mediated proteasomal degradation. Thereby, frees 60S subunit ribosomes from the stalled translation complex and prevents the accumulation of nascent polypeptide chains that are potentially toxic for the cell. Within the RQC complex, Clbn/NEMF specifically binds stalled 60S ribosomal subunits by recognizing an exposed, nascent chain-conjugated tRNA moiety. Following binding to stalled 60S ribosomal subunits, Clbn/NEMF mediates CAT tailing by recruiting alanine-charged tRNA to the A-site and directing the elongation of stalled nascent chains independently of mRNA or 40S subunits, leading to non-templated C-terminal alanine extensions (CAT tails). On mitochondrial surface, plays a role in mitochondrial-stress induced translational termination impairment and protein carboxyl terminal extension (MISTERMINATE). Plays a role in regulating nuclear transport possibly through directly binding to both emb and cargo proteins. Plays a role in the regulation of G1-to-S cell cycle transition. Regulates S phase checkpoint by antagonizing E2F1 activity. Together with hid and tefu/ATM, plays a role in DNA damage-induced apoptosis through both p53-dependent and -independent activity. Plays an essential role in the regulation of mitochondrial structure and redox state in enterocytes which is essential for the control of intestinal stem cells proliferation and intestinal homeostasis. The chain is Ribosome quality control complex subunit NEMF homolog from Drosophila melanogaster (Fruit fly).